Here is a 176-residue protein sequence, read N- to C-terminus: ATP-dependent protease subunit HslV (176 aa).

Thr-2 is a catalytic residue. The Na(+) site is built by Gly-157, Cys-160, and Thr-163.

It belongs to the peptidase T1B family. HslV subfamily. As to quaternary structure, a double ring-shaped homohexamer of HslV is capped on each side by a ring-shaped HslU homohexamer. The assembly of the HslU/HslV complex is dependent on binding of ATP.

Its subcellular location is the cytoplasm. It carries out the reaction ATP-dependent cleavage of peptide bonds with broad specificity.. Its activity is regulated as follows. Allosterically activated by HslU binding. Functionally, protease subunit of a proteasome-like degradation complex believed to be a general protein degrading machinery. This chain is ATP-dependent protease subunit HslV, found in Ectopseudomonas mendocina (strain ymp) (Pseudomonas mendocina).